The chain runs to 133 residues: ATP synthase epsilon chain, chloroplastic (133 aa).

It belongs to the ATPase epsilon chain family. In terms of assembly, F-type ATPases have 2 components, CF(1) - the catalytic core - and CF(0) - the membrane proton channel. CF(1) has five subunits: alpha(3), beta(3), gamma(1), delta(1), epsilon(1). CF(0) has three main subunits: a, b and c.

The protein resides in the plastid. It localises to the chloroplast thylakoid membrane. Its function is as follows. Produces ATP from ADP in the presence of a proton gradient across the membrane. The polypeptide is ATP synthase epsilon chain, chloroplastic (Solanum lycopersicum (Tomato)).